The following is a 451-amino-acid chain: Probable glycine dehydrogenase (decarboxylating) subunit 1 (451 aa).

It belongs to the GcvP family. N-terminal subunit subfamily. As to quaternary structure, the glycine cleavage system is composed of four proteins: P, T, L and H. In this organism, the P 'protein' is a heterodimer of two subunits.

The catalysed reaction is N(6)-[(R)-lipoyl]-L-lysyl-[glycine-cleavage complex H protein] + glycine + H(+) = N(6)-[(R)-S(8)-aminomethyldihydrolipoyl]-L-lysyl-[glycine-cleavage complex H protein] + CO2. The glycine cleavage system catalyzes the degradation of glycine. The P protein binds the alpha-amino group of glycine through its pyridoxal phosphate cofactor; CO(2) is released and the remaining methylamine moiety is then transferred to the lipoamide cofactor of the H protein. This Thermococcus kodakarensis (strain ATCC BAA-918 / JCM 12380 / KOD1) (Pyrococcus kodakaraensis (strain KOD1)) protein is Probable glycine dehydrogenase (decarboxylating) subunit 1.